A 137-amino-acid chain; its full sequence is MRKLGIDFGLSRIGFAISDESNSFSLALENFDYDGSYEKIIQKIQLFLDEYKIDKFIIGYPLNSRGEKTKTCLLIDEFIIHLEKNFDQKIKLINESYSSRKASEILHQANIKNKKQKDKKDMLAAKIILQDYLDLYK.

This sequence belongs to the YqgF nuclease family.

The protein resides in the cytoplasm. Its function is as follows. Could be a nuclease involved in processing of the 5'-end of pre-16S rRNA. The polypeptide is Putative pre-16S rRNA nuclease (Mycoplasmopsis synoviae (strain 53) (Mycoplasma synoviae)).